We begin with the raw amino-acid sequence, 1065 residues long: Valine--tRNA ligase, mitochondrial (1065 aa).

The transit peptide at methionine 1–glycine 15 directs the protein to the mitochondrion. The interval alanine 27–arginine 52 is disordered. The span at arginine 42 to arginine 52 shows a compositional bias: basic and acidic residues. Residues proline 146 to histidine 156 carry the 'HIGH' region motif. The short motif at lysine 659 to serine 663 is the 'KMSKS' region element. Lysine 662 contacts ATP.

It belongs to the class-I aminoacyl-tRNA synthetase family.

It localises to the mitochondrion. It carries out the reaction tRNA(Val) + L-valine + ATP = L-valyl-tRNA(Val) + AMP + diphosphate. Its function is as follows. Catalyzes the attachment of valine to tRNA(Val) in a two-step reaction: valine is first activated by ATP to form Val-AMP and then transferred to the acceptor end of tRNA(Val). In Rattus norvegicus (Rat), this protein is Valine--tRNA ligase, mitochondrial (Vars2).